A 1070-amino-acid chain; its full sequence is Carbamoyl phosphate synthase large chain (1070 aa).

The tract at residues 1 to 401 (MPKRDDIKTI…ALLKAVRSLE (401 aa)) is carboxyphosphate synthetic domain. Residues Arg-129, Arg-169, Gly-175, Gly-176, Lys-208, Ile-210, Glu-215, Gly-241, Ile-242, His-243, Gln-284, and Glu-298 each contribute to the ATP site. Positions 133–327 (RDLMNELGEP…IAKLAAKIAV (195 aa)) constitute an ATP-grasp 1 domain. 3 residues coordinate Mg(2+): Gln-284, Glu-298, and Asn-300. Mn(2+) is bound by residues Gln-284, Glu-298, and Asn-300. The tract at residues 402 to 546 (IGADHLLLEE…YSTYEDENES (145 aa)) is oligomerization domain. A carbamoyl phosphate synthetic domain region spans residues 547–929 (IRSSKESVIV…ALYKGFVASG (383 aa)). Residues 671 to 861 (EKALEILQIP…MANVATRVIL (191 aa)) enclose the ATP-grasp 2 domain. 10 residues coordinate ATP: Arg-707, Arg-746, Val-748, Glu-752, Gly-777, Val-778, His-779, Ser-780, Gln-820, and Glu-832. The Mg(2+) site is built by Gln-820, Glu-832, and Asn-834. 3 residues coordinate Mn(2+): Gln-820, Glu-832, and Asn-834. In terms of domain architecture, MGS-like spans 930–1070 (TTMHDYGTVL…SEVKQPKARV (141 aa)). Positions 930–1070 (TTMHDYGTVL…SEVKQPKARV (141 aa)) are allosteric domain.

This sequence belongs to the CarB family. As to quaternary structure, composed of two chains; the small (or glutamine) chain promotes the hydrolysis of glutamine to ammonia, which is used by the large (or ammonia) chain to synthesize carbamoyl phosphate. Tetramer of heterodimers (alpha,beta)4. Mg(2+) is required as a cofactor. Requires Mn(2+) as cofactor.

It carries out the reaction hydrogencarbonate + L-glutamine + 2 ATP + H2O = carbamoyl phosphate + L-glutamate + 2 ADP + phosphate + 2 H(+). The catalysed reaction is hydrogencarbonate + NH4(+) + 2 ATP = carbamoyl phosphate + 2 ADP + phosphate + 2 H(+). It functions in the pathway amino-acid biosynthesis; L-arginine biosynthesis; carbamoyl phosphate from bicarbonate: step 1/1. The protein operates within pyrimidine metabolism; UMP biosynthesis via de novo pathway; (S)-dihydroorotate from bicarbonate: step 1/3. Large subunit of the glutamine-dependent carbamoyl phosphate synthetase (CPSase). CPSase catalyzes the formation of carbamoyl phosphate from the ammonia moiety of glutamine, carbonate, and phosphate donated by ATP, constituting the first step of 2 biosynthetic pathways, one leading to arginine and/or urea and the other to pyrimidine nucleotides. The large subunit (synthetase) binds the substrates ammonia (free or transferred from glutamine from the small subunit), hydrogencarbonate and ATP and carries out an ATP-coupled ligase reaction, activating hydrogencarbonate by forming carboxy phosphate which reacts with ammonia to form carbamoyl phosphate. This Listeria innocua serovar 6a (strain ATCC BAA-680 / CLIP 11262) protein is Carbamoyl phosphate synthase large chain.